Here is a 320-residue protein sequence, read N- to C-terminus: MLRVFVIFSLFIAAINASGEFTVLNRPKAISFKGNDALESHYVGDVLYASMGNAVSGDTNWNGLTINDPFNLAKGVILVHVQGIGHVTTAGNVKTYELTGSGTDASLNALAAELEAANEPVCDINFEQFDDGVQAWKSCFGDFEAPAAKPTKHLNPSLHTADKQFLQEVGFINSAADHLAEMAKPSNVLMLRVSVDGVAKAHGEKSVAVEEANKLLSAAISRLLAASQKSSDSVLFVQTTEKDVAASRAKRDTIAASTTNPYNLAVYYGSDYPVIFNIILWFMVVFGLSLLAICYAIAAMDPGRDSIIYRMTSTRIKKDN.

The N-terminal stretch at 1-17 is a signal peptide; the sequence is MLRVFVIFSLFIAAINA. At 18–277 the chain is on the lumenal side; it reads SGEFTVLNRP…YGSDYPVIFN (260 aa). The chain crosses the membrane as a helical span at residues 278–298; sequence IILWFMVVFGLSLLAICYAIA. Topologically, residues 299-320 are cytoplasmic; the sequence is AMDPGRDSIIYRMTSTRIKKDN. The Mediates retrograde transport to the ER motif lies at 317–320; sequence KKDN.

Interacts with fz and fz2. Interacts (via N-terminus) with stan. As an accessory component of the multisubunit proton-transporting vacuolar (V)-ATPase protein pump, might interacts with VhaAC45. In terms of processing, proteolytically cleaved by a furin-like convertase in the trans-Golgi network to generate N- and C-terminal fragments. Cleavage is reduced in the fat body.

It localises to the cell membrane. The protein localises to the endoplasmic reticulum membrane. The protein resides in the vesicle. Its subcellular location is the apical cell membrane. It is found in the golgi apparatus membrane. It localises to the secreted. Multifunctional protein which functions as a transmembrane receptor in the planar cell polarity (PCP) and is involved in the assembly of the proton-transporting vacuolar (V)-ATPase protein pump. As transmembrane receptor mediates fz/PCP signaling through interaction with fz and stabilizes asymmetric PCP domains through its interaction with stan. Also mediates Wnt/beta-cat signaling through interaction with fz/fz2. Probably by controlling the assembly of the V-ATPase pump and thus the acidification of the endo-lysosomal system, plays a role in many neuronal processes including synapse morphology and synaptic transmission. In terms of biological role, stabilizes asymmetric Planar Cell Polarity (PCP) domains through its interaction with stan. This Drosophila melanogaster (Fruit fly) protein is ATPase H(+)-transporting accessory protein 2.